Consider the following 81-residue polypeptide: UPF0181 protein Spro_2806 (81 aa).

The disordered stretch occupies residues 43-81 (EKHQGDQVSVMFDDEDDDEEYQERPDDQADDDSEEDENY). 2 stretches are compositionally biased toward acidic residues: residues 54 to 63 (FDDEDDDEEY) and 70 to 81 (QADDDSEEDENY).

Belongs to the UPF0181 family.

This Serratia proteamaculans (strain 568) protein is UPF0181 protein Spro_2806.